Consider the following 135-residue polypeptide: Protein NrdI (135 aa).

The protein belongs to the NrdI family.

Functionally, probably involved in ribonucleotide reductase function. This is Protein NrdI from Pectobacterium carotovorum subsp. carotovorum (strain PC1).